Reading from the N-terminus, the 1571-residue chain is Paternally-expressed gene 3 protein (1571 aa).

Disordered stretches follow at residues 1 to 120 (MYHH…NPIQ) and 137 to 241 (AEDD…QERG). 5 stretches are compositionally biased toward basic and acidic residues: residues 35–56 (GSER…DRWP), 80–99 (FGLD…RSQD), 169–186 (PEAK…DESS), 193–215 (KFIK…ERPP), and 223–241 (DNWK…QERG). Residues 199–265 (ARNPKSGRAR…DLASRSRALE (67 aa)) form a 10 X 5 AA repeat of P-H-X-X-E region. The tract at residues 199–265 (ARNPKSGRAR…DLASRSRALE (67 aa)) is 3 X 5 AA repeat of P-H-D-D-K. 4 consecutive C2H2-type zinc fingers follow at residues 325-347 (YVCD…QIMH), 378-400 (FECK…RQIH), 436-458 (YECK…QKIH), and 520-542 (YECK…QKIH). A disordered region spans residues 456 to 495 (KIHGRGNSDDRDNERERERDRLRARAREQRERERERERER). Disordered stretches follow at residues 585–649 (ALMG…LKFP), 672–713 (EAQK…TYEG), and 764–820 (REDA…AKKK). Basic and acidic residues predominate over residues 592–614 (SSEHQKNRSRRNFFEGRGFEKPF). Composition is skewed to polar residues over residues 770-781 (GSSSSNYHTPNV) and 799-808 (DVTFSVPSSS). The segment covering 809-820 (VREHQKARAKKK) has biased composition (basic and acidic residues). Residues 850–872 (FECQECGEAFARRSELIEHQKIH) form a C2H2-type 5 zinc finger. The interval 937–1070 (FNAEEPHDKE…ESHGQEKVED (134 aa)) is disordered. Over residues 940–1070 (EEPHDKETHG…ESHGQEKVED (131 aa)) the composition is skewed to basic and acidic residues. Repeat copies occupy residues 942 to 946 (PHDKE), 967 to 971 (PHGDE), 987 to 991 (PHDDK), 992 to 996 (PHGQE), 997 to 1001 (PHDDK), 1002 to 1006 (PHGQE), 1007 to 1011 (PHDDK), 1012 to 1016 (PHGQE), 1017 to 1021 (PHGDE), 1022 to 1026 (PHGQE), 1027 to 1031 (PHGDE), 1032 to 1036 (PHDKE), and 1047 to 1051 (PHSEE). 4 C2H2-type zinc fingers span residues 1091–1113 (YECQ…QDTH), 1147–1169 (YECP…QRVH), 1209–1231 (IRCR…MRQH), and 1266–1289 (FECT…TKVH). The segment at 1317–1339 (YECKDCGQSFLDDTVIAERMVFH) adopts a C2H2-type 10; degenerate zinc-finger fold. The tract at residues 1373 to 1487 (NAEAAEPEVE…DQEIEVEEPY (115 aa)) is disordered. 3 stretches are compositionally biased toward acidic residues: residues 1377-1397 (AEPE…EVEA), 1405-1418 (EGPD…DGEA), and 1431-1485 (DADE…EVEE). 2 consecutive C2H2-type zinc fingers follow at residues 1488-1510 (YNCH…LKSH) and 1547-1569 (FKCD…QNSH).

Belongs to the krueppel C2H2-type zinc-finger protein family. Homodimer. Interacts with SIAH1A and SIAH2. Interacts with TRAF2. Brain, glial cells, neurons, skeletal muscle, uterus and placenta. In the placenta it is found in all trophoblast cells.

Its subcellular location is the nucleus. It is found in the cytoplasm. Its function is as follows. Induces apoptosis in cooperation with SIAH1A. Acts as a mediator between p53/TP53 and BAX in a neuronal death pathway that is activated by DNA damage. Acts synergistically with TRAF2 and inhibits TNF induced apoptosis through activation of NF-kappa-B. Plays a role in regulating maternal behavior and offspring growth. In Mus musculus (Mouse), this protein is Paternally-expressed gene 3 protein (Peg3).